A 327-amino-acid chain; its full sequence is Lipoyl synthase (327 aa).

Residues Cys-72, Cys-77, Cys-83, Cys-98, Cys-102, Cys-105, and Ser-313 each contribute to the [4Fe-4S] cluster site. Residues 83 to 302 form the Radical SAM core domain; the sequence is CWSHGTATIM…RRVGLEKGFL (220 aa).

It belongs to the radical SAM superfamily. Lipoyl synthase family. It depends on [4Fe-4S] cluster as a cofactor.

It is found in the cytoplasm. The enzyme catalyses [[Fe-S] cluster scaffold protein carrying a second [4Fe-4S](2+) cluster] + N(6)-octanoyl-L-lysyl-[protein] + 2 oxidized [2Fe-2S]-[ferredoxin] + 2 S-adenosyl-L-methionine + 4 H(+) = [[Fe-S] cluster scaffold protein] + N(6)-[(R)-dihydrolipoyl]-L-lysyl-[protein] + 4 Fe(3+) + 2 hydrogen sulfide + 2 5'-deoxyadenosine + 2 L-methionine + 2 reduced [2Fe-2S]-[ferredoxin]. Its pathway is protein modification; protein lipoylation via endogenous pathway; protein N(6)-(lipoyl)lysine from octanoyl-[acyl-carrier-protein]: step 2/2. Its function is as follows. Catalyzes the radical-mediated insertion of two sulfur atoms into the C-6 and C-8 positions of the octanoyl moiety bound to the lipoyl domains of lipoate-dependent enzymes, thereby converting the octanoylated domains into lipoylated derivatives. The polypeptide is Lipoyl synthase (Francisella philomiragia subsp. philomiragia (strain ATCC 25017 / CCUG 19701 / FSC 153 / O#319-036)).